A 496-amino-acid polypeptide reads, in one-letter code: L-arabinose isomerase (496 aa).

Residues Glu-302, Glu-329, His-346, and His-445 each contribute to the Mn(2+) site.

It belongs to the arabinose isomerase family. Requires Mn(2+) as cofactor.

It carries out the reaction beta-L-arabinopyranose = L-ribulose. The protein operates within carbohydrate degradation; L-arabinose degradation via L-ribulose; D-xylulose 5-phosphate from L-arabinose (bacterial route): step 1/3. Functionally, catalyzes the conversion of L-arabinose to L-ribulose. The polypeptide is L-arabinose isomerase (Thermotoga neapolitana (strain ATCC 49049 / DSM 4359 / NBRC 107923 / NS-E)).